The chain runs to 671 residues: DNA ligase (671 aa).

NAD(+) is bound by residues 32–36 (DAEYD), 81–82 (SL), and glutamate 113. The N6-AMP-lysine intermediate role is filled by lysine 115. NAD(+) contacts are provided by arginine 136, glutamate 173, lysine 290, and lysine 314. 4 residues coordinate Zn(2+): cysteine 408, cysteine 411, cysteine 426, and cysteine 432. The BRCT domain maps to 593 to 671 (EIDSPFAGKT…EAEMLRLLGS (79 aa)).

This sequence belongs to the NAD-dependent DNA ligase family. LigA subfamily. Mg(2+) is required as a cofactor. The cofactor is Mn(2+).

The enzyme catalyses NAD(+) + (deoxyribonucleotide)n-3'-hydroxyl + 5'-phospho-(deoxyribonucleotide)m = (deoxyribonucleotide)n+m + AMP + beta-nicotinamide D-nucleotide.. DNA ligase that catalyzes the formation of phosphodiester linkages between 5'-phosphoryl and 3'-hydroxyl groups in double-stranded DNA using NAD as a coenzyme and as the energy source for the reaction. It is essential for DNA replication and repair of damaged DNA. The protein is DNA ligase of Escherichia coli O157:H7.